A 496-amino-acid chain; its full sequence is Membrane-bound lytic murein transglycosylase F (496 aa).

Positions 1 to 31 (MPIFSTRVLTYLRCIFRLFIGLMLLLTLVGC) are cleaved as a signal peptide. The segment at 32–271 (DFYTPSSQLE…KLDEKYFGHV (240 aa)) is non-LT domain. Residues 273-496 (NFDFVDTRTF…AEVVKQITLR (224 aa)) form an LT domain region. The active site involves E316. A disordered region spans residues 464 to 485 (HRREELDEDDSSEPQSTERPTV).

In the N-terminal section; belongs to the bacterial solute-binding protein 3 family. This sequence in the C-terminal section; belongs to the transglycosylase Slt family.

It localises to the cell outer membrane. The enzyme catalyses Exolytic cleavage of the (1-&gt;4)-beta-glycosidic linkage between N-acetylmuramic acid (MurNAc) and N-acetylglucosamine (GlcNAc) residues in peptidoglycan, from either the reducing or the non-reducing ends of the peptidoglycan chains, with concomitant formation of a 1,6-anhydrobond in the MurNAc residue.. Its function is as follows. Murein-degrading enzyme that degrades murein glycan strands and insoluble, high-molecular weight murein sacculi, with the concomitant formation of a 1,6-anhydromuramoyl product. Lytic transglycosylases (LTs) play an integral role in the metabolism of the peptidoglycan (PG) sacculus. Their lytic action creates space within the PG sacculus to allow for its expansion as well as for the insertion of various structures such as secretion systems and flagella. This Aeromonas salmonicida (strain A449) protein is Membrane-bound lytic murein transglycosylase F.